A 470-amino-acid polypeptide reads, in one-letter code: Acetyl-CoA decarbonylase/synthase complex subunit beta 2 (470 aa).

The [Ni-Fe-S] cluster site is built by Cys-190, Cys-193, Cys-279, and Cys-281.

It belongs to the CdhC family. As to quaternary structure, monomer. The ACDS complex is made up of alpha, epsilon, beta, gamma and delta chains with a probable stoichiometry of (alpha(2)epsilon(2))(4)-beta(8)-(gamma(1)delta(1))(8) (Potential). The cofactor is [Ni-Fe-S] cluster.

It carries out the reaction Co(I)-[corrinoid Fe-S protein] + acetyl-CoA + H(+) = methyl-Co(III)-[corrinoid Fe-S protein] + CO + CoA. Its pathway is one-carbon metabolism; methanogenesis from acetate. Functionally, part of a complex that catalyzes the reversible cleavage of acetyl-CoA, allowing growth on acetate as sole source of carbon and energy. The alpha-epsilon complex generates CO from CO(2), while the beta subunit (this protein) combines the CO with CoA and a methyl group to form acetyl-CoA. The methyl group, which is incorporated into acetyl-CoA, is transferred to the beta subunit by a corrinoid iron-sulfur protein (the gamma-delta complex). The protein is Acetyl-CoA decarbonylase/synthase complex subunit beta 2 (cdhC2) of Methanosarcina mazei (strain ATCC BAA-159 / DSM 3647 / Goe1 / Go1 / JCM 11833 / OCM 88) (Methanosarcina frisia).